The sequence spans 407 residues: RNA-binding motif, single-stranded-interacting protein 2 (407 aa).

An N-acetylmethionine modification is found at Met1. The interval 29 to 54 (QQMAPPSPSNSTPNSSSGSNGNDQLS) is disordered. The span at 37-50 (SNSTPNSSSGSNGN) shows a compositional bias: low complexity. 2 RRM domains span residues 56–129 (TNLY…MAKQ) and 135–220 (TNLY…FADG). Ser106 bears the Phosphoserine mark. Thr269 is subject to Phosphothreonine. Phosphoserine is present on residues Ser280 and Ser285.

It is found in the nucleus. In Homo sapiens (Human), this protein is RNA-binding motif, single-stranded-interacting protein 2 (RBMS2).